Here is a 525-residue protein sequence, read N- to C-terminus: Nuclear pore glycoprotein p62 (525 aa).

Position 2 is an N-acetylserine (serine 2). A run of 5 repeats spans residues 6–7, 46–47, 78–79, 115–116, and 143–144. Residues 6–144 form a 5 X 2 AA repeats of F-G region; sequence FGGTGAPAGG…GTAPTGFVFG (139 aa). The disordered stretch occupies residues 260–293; the sequence is LKAPGAAPGASTTSTTTTTTTTTTTASTSSSTTT. A compositionally biased stretch (low complexity) spans 269–293; it reads ASTTSTTTTTTTTTTTASTSSSTTT. The interval 331–461 is required for centrosome localization; the sequence is MTYAQLESLI…QDLKDIIEHL (131 aa). A coiled-coil region spans residues 331 to 461; the sequence is MTYAQLESLI…QDLKDIIEHL (131 aa). A phosphoserine mark is found at serine 411 and serine 421. Residue serine 471 is glycosylated (O-linked (GlcNAc) serine).

It belongs to the nucleoporin NSP1/NUP62 family. In terms of assembly, component of the p62 complex, a complex at least composed of NUP62, NUP54, and NUP58. Interacts with NUP88. Interacts with NUTF2. Interacts with HIKESHI. Interacts with OSBPL8. Interacts with CAPG. Interacts with SAS6 and TUBG1 at the centrosome. Interacts with MCM3AP. In terms of processing, the inner channel of the NPC has a different redox environment from the cytoplasm and allows the formation of interchain disulfide bonds between some nucleoporins, the significant increase of these linkages upon oxidative stress reduces the permeability of the NPC.

The protein localises to the nucleus. Its subcellular location is the nuclear pore complex. The protein resides in the cytoplasm. It is found in the cytoskeleton. It localises to the spindle pole. The protein localises to the nucleus envelope. Its subcellular location is the microtubule organizing center. The protein resides in the centrosome. Functionally, essential component of the nuclear pore complex. The N-terminal is probably involved in nucleocytoplasmic transport. The C-terminal is involved in protein-protein interaction probably via coiled-coil formation, promotes its association with centrosomes and may function in anchorage of p62 to the pore complex. Plays a role in mitotic cell cycle progression by regulating centrosome segregation, centriole maturation and spindle orientation. It might be involved in protein recruitment to the centrosome after nuclear breakdown. In Rattus norvegicus (Rat), this protein is Nuclear pore glycoprotein p62 (Nup62).